The primary structure comprises 88 residues: Conotoxin Ca8.3 (88 aa).

Positions 1–21 are cleaved as a signal peptide; it reads MMLKMGAMFVLLLLFILPSSQ. A propeptide spanning residues 22-46 is cleaved from the precursor; that stretch reads QEGDVQARKTHLKSGFYGTLAMSTR.

It belongs to the conotoxin S superfamily. Post-translationally, contains 5 disulfide bonds. Expressed by the venom duct.

The protein resides in the secreted. The protein is Conotoxin Ca8.3 of Conus caracteristicus (Characteristic cone).